Consider the following 441-residue polypeptide: Protein MONOCULM 1 (441 aa).

The segment at 1-33 (MLRSLHSSSSSDTDNNSGGCKNNGGGGGEAAAA) is disordered. Residues 7-20 (SSSSSDTDNNSGGC) are compositionally biased toward low complexity. The segment covering 21–33 (KNNGGGGGEAAAA) has biased composition (gly residues). The region spanning 41 to 437 (RAVAAAAPST…RPLLSVSAWQ (397 aa)) is the GRAS domain. Positions 48–126 (PSTRDLLLAC…GAARPASSGA (79 aa)) are leucine repeat I (LRI). The tract at residues 127-195 (YLAFNQIAPF…LGPPEVRVTG (69 aa)) is VHIID. The short motif at 158–162 (VHILD) is the VHIID element. Residues 205-256 (RTGNRLRAFARSIHLPFHFTPLLLSCATTAPHHVAGTSTGAAAAASTAAAAT) are leucine repeat II (LRII). A PFYRE region spans residues 266 to 361 (LAVNCVMFLH…QEVLGREIEA (96 aa)). The SAW stretch occupies residues 364 to 437 (GPSGGRWWRG…RPLLSVSAWQ (74 aa)).

Belongs to the GRAS family. As to expression, expressed in a small number of epidermal or subepidermal cells at the leaf axils, in axillary meristems and the entire tiller buds. Undetected in the shoot apical meristem.

Its subcellular location is the nucleus. In terms of biological role, putative transcription regulator that controls rice tillering by initiating axillary buds and promoting their outgrowth. Rice tiller is a specialized grain-bearing branch that is formed on the unelongated basal internode and grows independently of the mother stem (culm) by means of its own adventitious roots. The chain is Protein MONOCULM 1 from Oryza sativa subsp. japonica (Rice).